The following is a 679-amino-acid chain: MESPAFSKPLKDKTIKKALLGVLGILLVTGGLAHKDSPHLIYNLTWEVTNGEQETVWAVTGNHPLWTWWPDLTPDLCMLALHGPTHWGLDNRPPYSSPPGPPCCSGDKGAVSGCARDCDEPLTSYSPRCNTAWNRMKLAQVTHAPKEGFYVCPGSHRPRWARSCGGPEAYYCASWGCETTGRAAWKPTSSWDYITVSNNLSSPQAPKACKNNGWCNPLVVRFTGPGKRATSWTTGHEWGLRLYISGHDPGLTFGIRLRITDLGPRVPIGPNPVLSDQRPPSRPVPARPPPPSNSTPTGDPLTPPTGDPLTPTKPPQAGTGDRLLNLVQGAYLALNMTNPTKTQECWLCLVSEPPYYEGVAVLGDYTKHETAPTNCSSRAQHKLTLSEVTGQGKCLGAVPKTHQALCNHTEPTVSGSNYLVAPEGTLWACSTGLTPCLSTTVLNLTTDYCVLVELWPKVTYHPSEYVYTQFEPGVRFRREPVSLTLALLLGGLTMGGIAARVGTGTTALVATQQFQQLQAAMHNDLKAVEESITNLERSLTSLSEVVLQNRRGLDLLFLKEGGLCAALKEECCFYADHTGLVRDSMAKLRERLNQRQKLFESGQGWFEGLFNRSPWFTTLISTIMGPLIVLLLILLFGPCILNRLVQFVKDRISVVQALILTQQYHQLKSIDPEEVESRE.

The disordered stretch occupies residues 268 to 321 (IGPNPVLSDQRPPSRPVPARPPPPSNSTPTGDPLTPPTGDPLTPTKPPQAGTGD). Composition is skewed to pro residues over residues 280–293 (PSRP…PPSN) and 301–314 (LTPP…PTKP).

This is Retrovirus-related Env polyprotein from Fv-4 locus (Fv4) from Mus musculus (Mouse).